The chain runs to 250 residues: DNA polymerase sliding clamp (250 aa).

Belongs to the PCNA family. In terms of assembly, homotrimer. The subunits circularize to form a toroid; DNA passes through its center. Replication factor C (RFC) is required to load the toroid on the DNA.

Its function is as follows. Sliding clamp subunit that acts as a moving platform for DNA processing. Responsible for tethering the catalytic subunit of DNA polymerase and other proteins to DNA during high-speed replication. This Methanococcus maripaludis (strain DSM 14266 / JCM 13030 / NBRC 101832 / S2 / LL) protein is DNA polymerase sliding clamp.